The sequence spans 457 residues: MATGKIVQIIGAVIDVEFPQDAVPKVYDALKVESGLTLEVQQQLGGGLVRCIALGTSDGLKRGLKVENTGNPIQVPVGTKTLGRIMNVLGEPIDEKGPIGEEARWDIHRAAPSYEEQSNSTELLETGIKVIDLICPFAKGGKVGLFGGAGVGKTVNMMELIRNIAIEHSGYSVFAGVGERTREGNDFYHEMTDSNVLDKVSLVYGQMNEPPGNRLRVALTGLTMAEKFRDEGRDVLFFVDNIYRYTLAGTEVSALLGRMPSAVGYQPTLAEEMGVLQERITSTKTGSITSVQAVYVPADDLTDPSPATTFAHLDSTVVLSRNIASLGIYPAVDPLDSTSRQLDPLVVGEEHYNVARGVQGTLQRYKELKDIIAILGMDELSEDDKLVVARARKIERFLSQPFFVAEVFTGSQGKYVSLKDTIRGFKGILEGEFDHIPEQAFYMAGSIDEVVERASKM.

Position 147-154 (147-154) interacts with ATP; it reads GGAGVGKT.

It belongs to the ATPase alpha/beta chains family. F-type ATPases have 2 components, CF(1) - the catalytic core - and CF(0) - the membrane proton channel. CF(1) has five subunits: alpha(3), beta(3), gamma(1), delta(1), epsilon(1). CF(0) has three main subunits: a(1), b(2) and c(9-12). The alpha and beta chains form an alternating ring which encloses part of the gamma chain. CF(1) is attached to CF(0) by a central stalk formed by the gamma and epsilon chains, while a peripheral stalk is formed by the delta and b chains.

Its subcellular location is the cell inner membrane. It catalyses the reaction ATP + H2O + 4 H(+)(in) = ADP + phosphate + 5 H(+)(out). In terms of biological role, produces ATP from ADP in the presence of a proton gradient across the membrane. The catalytic sites are hosted primarily by the beta subunits. This Actinobacillus pleuropneumoniae serotype 3 (strain JL03) protein is ATP synthase subunit beta.